Reading from the N-terminus, the 335-residue chain is 2-acylglycerol O-acyltransferase 2-B (335 aa).

2 consecutive transmembrane segments (helical) span residues 24 to 44 and 104 to 124; these read WAVS…LLLF and YIMG…NFCT. N-linked (GlcNAc...) asparagine glycosylation is present at Asn206.

Belongs to the diacylglycerol acyltransferase family.

The protein resides in the endoplasmic reticulum membrane. Its subcellular location is the cytoplasm. It is found in the perinuclear region. The catalysed reaction is a 2-acylglycerol + an acyl-CoA = a 1,2-diacylglycerol + CoA. It catalyses the reaction a 2-acylglycerol + an acyl-CoA = a 1,2-diacyl-sn-glycerol + CoA. It carries out the reaction a 2-acylglycerol + an acyl-CoA = a 2,3-diacyl-sn-glycerol + CoA. The enzyme catalyses a 1-acylglycerol + an acyl-CoA = a 1,2-diacylglycerol + CoA. The catalysed reaction is a 1-acylglycerol + an acyl-CoA = a 1,3-diacylglycerol + CoA. It catalyses the reaction 1-O-alkylglycerol + an acyl-CoA = 1-O-alkyl-3-acylglycerol + CoA. It carries out the reaction an acyl-CoA + a 1,2-diacyl-sn-glycerol = a triacyl-sn-glycerol + CoA. The protein operates within glycerolipid metabolism; triacylglycerol biosynthesis. In terms of biological role, catalyzes the formation of diacylglycerol from 2-monoacylglycerol and fatty acyl-CoA. Its function is as follows. Involved in glycerolipid synthesis and lipid metabolism. Catalyzes the formation of diacylglycerol, the precursor of triacylglycerol, by transferring the acyl chain of a fatty acyl-CoA to a monoacylglycerol. Plays a central role in absorption of dietary fat in the small intestine by catalyzing the resynthesis of triacylglycerol in enterocytes. Has a preference toward monoacylglycerols containing unsaturated fatty acids in an order of C18:3 &gt; C18:2 &gt; C18:1 &gt; C18:0 at sn-2. Able to use 1-monoalkylglycerol (1-MAkG, 1-O-alkylglycerol) as an acyl acceptor for the synthesis of monoalkyl-monoacylglycerol (MAMAG, 1-O-alkyl-3-acylglycerol or 1-O-alkyl-2-acylglycerol) and subsequently, with lower efficiency, may add another acyl chain producing monoalkyl-diacylglycerol (MADAG, 1-O-alkyl-2,3-diacylglycerol). Possesses weak but significant activity with diacylglycerol as substrate, producing triacylglycerol (triacyl-sn-glycerol). The protein is 2-acylglycerol O-acyltransferase 2-B (mogat2-b) of Xenopus laevis (African clawed frog).